Reading from the N-terminus, the 419-residue chain is Metacaspase-1A (419 aa).

The tract at residues 1–89 (MHHQQSSYGG…PPDQPVSFGQ (89 aa)) is disordered. The segment covering 41 to 51 (NGYNSPQQNYG) has biased composition (polar residues). Residues 59–71 (YQQQSAYQNSYNQ) are compositionally biased toward low complexity. Catalysis depends on residues H190 and C246.

It belongs to the peptidase C14B family.

Functionally, involved in cell death (apoptosis). The protein is Metacaspase-1A (casA) of Aspergillus oryzae (strain ATCC 42149 / RIB 40) (Yellow koji mold).